Reading from the N-terminus, the 192-residue chain is Transcription antitermination protein NusB (192 aa).

The protein belongs to the NusB family.

In terms of biological role, involved in transcription antitermination. Required for transcription of ribosomal RNA (rRNA) genes. Binds specifically to the boxA antiterminator sequence of the ribosomal RNA (rrn) operons. This is Transcription antitermination protein NusB from Lactococcus lactis subsp. lactis (strain IL1403) (Streptococcus lactis).